Consider the following 800-residue polypeptide: DNA topoisomerase 1 (800 aa).

The Toprim domain maps to 1 to 111 (MKLVIVESPA…VKSDDFFKRV (111 aa)). Mg(2+) is bound by residues Glu7 and Asp80. The 437-residue stretch at 132 to 568 (DNNLVNAQQA…FWNGFNHNIE (437 aa)) folds into the Topo IA-type catalytic domain. The interval 166-171 (SAGRVQ) is interaction with DNA. Residue Tyr304 is the O-(5'-phospho-DNA)-tyrosine intermediate of the active site. The segment at 600–627 (CPSCKTGELSLKLGKFGAFLACSNYPEC) adopts a C4-type zinc-finger fold.

The protein belongs to the type IA topoisomerase family. As to quaternary structure, monomer. It depends on Mg(2+) as a cofactor.

The catalysed reaction is ATP-independent breakage of single-stranded DNA, followed by passage and rejoining.. Its function is as follows. Releases the supercoiling and torsional tension of DNA, which is introduced during the DNA replication and transcription, by transiently cleaving and rejoining one strand of the DNA duplex. Introduces a single-strand break via transesterification at a target site in duplex DNA. The scissile phosphodiester is attacked by the catalytic tyrosine of the enzyme, resulting in the formation of a DNA-(5'-phosphotyrosyl)-enzyme intermediate and the expulsion of a 3'-OH DNA strand. The free DNA strand then undergoes passage around the unbroken strand, thus removing DNA supercoils. Finally, in the religation step, the DNA 3'-OH attacks the covalent intermediate to expel the active-site tyrosine and restore the DNA phosphodiester backbone. The protein is DNA topoisomerase 1 of Rickettsia bellii (strain RML369-C).